The primary structure comprises 164 residues: Interferon gamma (164 aa).

The signal sequence occupies residues 1–19 (MTCQTYNLFVLSVIMIYYG). Residues Asn-42 and Asn-61 are each glycosylated (N-linked (GlcNAc...) asparagine).

It belongs to the type II (or gamma) interferon family. As to quaternary structure, homodimer.

The protein localises to the secreted. Produced by lymphocytes activated by specific antigens or mitogens. IFN-gamma, in addition to having antiviral activity, has important immunoregulatory functions. It is a potent activator of macrophages, it has antiproliferative effects on transformed cells and it can potentiate the antiviral and antitumor effects of the type I interferons. The chain is Interferon gamma (IFNG) from Phasianus colchicus colchicus (Black-necked pheasant).